The chain runs to 271 residues: Aminoglycoside 3'-phosphotransferase (271 aa).

Aspartate 198 serves as the catalytic Proton acceptor.

It belongs to the aminoglycoside phosphotransferase family.

The enzyme catalyses kanamycin A + ATP = kanamycin 3'-phosphate + ADP + H(+). In terms of biological role, resistance to kanamycin and structurally-related aminoglycosides, including amikacin. This Escherichia coli protein is Aminoglycoside 3'-phosphotransferase (aphA1).